The chain runs to 325 residues: ATPase GET3 (325 aa).

34 to 41 provides a ligand contact to ATP; the sequence is KGGVGKTT. Asp-63 is a catalytic residue. Residues Glu-243 and Asn-270 each coordinate ATP. The Zn(2+) site is built by Cys-281 and Cys-284.

Belongs to the arsA ATPase family. As to quaternary structure, homodimer.

It localises to the cytoplasm. It is found in the endoplasmic reticulum. Functionally, ATPase required for the post-translational delivery of tail-anchored (TA) proteins to the endoplasmic reticulum. Recognizes and selectively binds the transmembrane domain of TA proteins in the cytosol. This complex then targets to the endoplasmic reticulum by membrane-bound receptors, where the tail-anchored protein is released for insertion. This process is regulated by ATP binding and hydrolysis. ATP binding drives the homodimer towards the closed dimer state, facilitating recognition of newly synthesized TA membrane proteins. ATP hydrolysis is required for insertion. Subsequently, the homodimer reverts towards the open dimer state, lowering its affinity for the membrane-bound receptor, and returning it to the cytosol to initiate a new round of targeting. The polypeptide is ATPase GET3 (Coccidioides posadasii (strain C735) (Valley fever fungus)).